We begin with the raw amino-acid sequence, 330 residues long: Clp protease adapter protein ClpF, chloroplastic (330 aa).

A chloroplast-targeting transit peptide spans 1 to 65 (MVQSQSLSTL…KSLKQRNLLR (65 aa)). An NTD, required for CLPS1-binding region spans residues 66-138 (VEARWPFQGG…VEEESIRLQE (73 aa)). 2 coiled-coil regions span residues 112–139 (NLEQ…LQEG) and 175–195 (AAKL…VSAK). The region spanning 153-188 (GISIIRLRADLQNAIDSEDYGLAAKLRDEISKLEAE) is the UVR domain. The yccV-like stretch occupies residues 203–310 (EYAFRLGQKL…TAGDFIPVKQ (108 aa)).

In terms of assembly, binds to CLPC1 and CLPC2. Interacts with ClpS1; this interaction stimulates their association with ClpC. Associates with the Clp substrate HEMA1 (GluTR). Expressed constitutively in photosynthetic tissues such as leaves, stems and flowers, and, at low levels, in siliques.

It localises to the plastid. Its subcellular location is the chloroplast. Clp protease adapter that facilitates CLPS1 recruitment to ClpC chaperones thus forming a binary adapter for selective substrate recognition and delivery to plastid Clp protease system (CLPC). In Arabidopsis thaliana (Mouse-ear cress), this protein is Clp protease adapter protein ClpF, chloroplastic.